The sequence spans 66 residues: FMRFamide-like neuropeptide 21 (66 aa).

An N-terminal signal peptide occupies residues 1 to 16 (MRLFILLSCLLAWVLA).

Belongs to the FARP (FMRFamide related peptide) family. In terms of processing, may be processed by convertase egl-3. In terms of tissue distribution, expressed in the ADL, ASE and ASH sensory neurons, the URA motor neurons and the MC, M2 and M4 pharyngeal neurons.

The protein localises to the secreted. Its function is as follows. FMRFamide-like neuropeptide. Involved in modulating locomotion quiescence during the sleep-like state called lethargus which occurs during molting between larval and adult stages, acting via the G-protein coupled receptor npr-1. Plays a role in modulating social and feeding behavior. In terms of biological role, ligand to G-protein coupled receptor npr-1. The sequence is that of FMRFamide-like neuropeptide 21 from Caenorhabditis elegans.